A 546-amino-acid chain; its full sequence is Putative serine/threonine-protein kinase L268 (546 aa).

A Cyclin N-terminal domain is found at 1 to 112 (MVCFSKYSGI…ILQTLDFHLV (112 aa)). Positions 260–544 (ITVVKNLGEG…QTLEEFNKFN (285 aa)) constitute a Protein kinase domain. ATP is bound by residues 266 to 274 (LGEGTYGTV) and K287. D389 serves as the catalytic Proton acceptor.

The protein belongs to the protein kinase superfamily. Ser/Thr protein kinase family.

The catalysed reaction is L-seryl-[protein] + ATP = O-phospho-L-seryl-[protein] + ADP + H(+). It carries out the reaction L-threonyl-[protein] + ATP = O-phospho-L-threonyl-[protein] + ADP + H(+). The chain is Putative serine/threonine-protein kinase L268 from Acanthamoeba polyphaga mimivirus (APMV).